A 128-amino-acid chain; its full sequence is NADH-quinone oxidoreductase subunit A (128 aa).

3 helical membrane passes run 5 to 25 (IPILVLAALAAAFAVVSVVIA), 72 to 92 (LTAMLFIVFDIEIVFLYPWAV), and 100 to 120 (FALVEMAIFMLTVFVAYAYVW).

It belongs to the complex I subunit 3 family. As to quaternary structure, NDH-1 is composed of 14 different subunits. Subunits NuoA, H, J, K, L, M, N constitute the membrane sector of the complex.

It localises to the cell membrane. The catalysed reaction is a quinone + NADH + 5 H(+)(in) = a quinol + NAD(+) + 4 H(+)(out). Functionally, NDH-1 shuttles electrons from NADH, via FMN and iron-sulfur (Fe-S) centers, to quinones in the respiratory chain. The immediate electron acceptor for the enzyme in this species is believed to be a menaquinone. Couples the redox reaction to proton translocation (for every two electrons transferred, four hydrogen ions are translocated across the cytoplasmic membrane), and thus conserves the redox energy in a proton gradient. This is NADH-quinone oxidoreductase subunit A from Mycobacterium bovis (strain ATCC BAA-935 / AF2122/97).